The following is a 178-amino-acid chain: Fimbrial adapter PapK (178 aa).

The signal sequence occupies residues 1–21 (MIKSTGALLLFAALSAGQAIA).

The protein localises to the secreted. It localises to the fimbrium. In terms of biological role, adapter that links the pilus rod to the base of the tip fibrillum. Regulates the length of the tip fibrillum and joins it to the pilus rod. Pili are polar filaments radiating from the surface of the bacterium to a length of 0.5-1.5 micrometers and numbering 100-300 per cell, and enable bacteria to colonize the epithelium of specific host organs. The chain is Fimbrial adapter PapK (papK) from Escherichia coli O6:H1 (strain CFT073 / ATCC 700928 / UPEC).